Consider the following 109-residue polypeptide: Flagellar hook-basal body complex protein FliE (109 aa).

The segment at 1 to 38 is disordered; it reads MQAIHNDKSLLSPFSELNTDNRTKREESGNAFKEQKGG. The segment covering 19–38 has biased composition (basic and acidic residues); sequence TDNRTKREESGNAFKEQKGG.

Belongs to the FliE family.

The protein localises to the bacterial flagellum basal body. The polypeptide is Flagellar hook-basal body complex protein FliE (Helicobacter pylori (strain G27)).